A 118-amino-acid chain; its full sequence is Large ribosomal subunit protein bL19 (118 aa).

It belongs to the bacterial ribosomal protein bL19 family.

Its function is as follows. This protein is located at the 30S-50S ribosomal subunit interface and may play a role in the structure and function of the aminoacyl-tRNA binding site. This Geobacter sulfurreducens (strain ATCC 51573 / DSM 12127 / PCA) protein is Large ribosomal subunit protein bL19.